Here is a 347-residue protein sequence, read N- to C-terminus: MIKLSKKYCLGISFVLYILLSVCEGHKNLTCDFNDVYKLEFHPNQQTSVTKLCNVTPNVLEKVTIKCGSDKLNYNLYPPTCFEEVYASRNMMHLKKIKEFVIGSSMFMRRSLTPNKINEVSFRIPPNMMPEKPIYCFCENKKTITINGSNGNPSSKKDIINRGIVEIIIPSLNEKVKGCDFTTSESTIFSKGYSINEISNKSSNNQQDIVCTVKAHANDLIGFKCPSNYSVEPHDCFVSAFNLSGKNENLENKLKLTNIIMDHYNNTFYSRLPSLISDNWKFFCVCSKDNEKKLVFTVEASISSSNTKLASRYNTYQDYISNSSFLTLSSYCAFITFIITSFLSFIL.

The or 25 signal peptide spans 1–23; sequence MIKLSKKYCLGISFVLYILLSVC. 2 6-Cys domains span residues 27 to 172 and 175 to 305; these read KNLT…IPSL and KVKG…ISSS. Residue Asn28 is glycosylated (N-linked (GlcNAc...) asparagine). Intrachain disulfides connect Cys31–Cys53, Cys67–Cys138, and Cys81–Cys136. Asn147, Asn200, Asn228, Asn242, Asn265, and Asn322 each carry an N-linked (GlcNAc...) asparagine glycan. 3 cysteine pairs are disulfide-bonded: Cys179-Cys211, Cys225-Cys286, and Cys236-Cys284. Asn322 is lipidated: GPI-anchor amidated asparagine. Residues 323–347 constitute a propeptide, removed in mature form; it reads SSFLTLSSYCAFITFIITSFLSFIL.

As to quaternary structure, heterodimer; heterodimerizes with PF41. May form an antiparallel heterodimer with PF41.

The protein resides in the cell surface. It is found in the cell membrane. This Plasmodium falciparum protein is Merozoite surface protein P12 (PF12).